The following is a 128-amino-acid chain: Histone H2A type 1-J (128 aa).

The tract at residues 1–22 is disordered; the sequence is MSGRGKQGGKARAKAKTRSSRA. An N-acetylserine modification is found at serine 2. At serine 2 the chain carries Phosphoserine; by RPS6KA5. Position 4 is a citrulline; alternate (arginine 4). Arginine 4 carries the symmetric dimethylarginine; by PRMT5; alternate modification. At lysine 6 the chain carries N6-(2-hydroxyisobutyryl)lysine. Over residues 7-19 the composition is skewed to basic residues; that stretch reads QGGKARAKAKTRS. Residue lysine 10 is modified to N6-(2-hydroxyisobutyryl)lysine; alternate. 2 positions are modified to N6-(beta-hydroxybutyryl)lysine; alternate: lysine 10 and lysine 14. An N6-lactoyllysine; alternate modification is found at lysine 10. N6-succinyllysine; alternate is present on lysine 10. Residue lysine 14 forms a Glycyl lysine isopeptide (Lys-Gly) (interchain with G-Cter in ubiquitin); alternate linkage. Lysine 16 is covalently cross-linked (Glycyl lysine isopeptide (Lys-Gly) (interchain with G-Cter in ubiquitin)). Lysine 37 bears the N6-(2-hydroxyisobutyryl)lysine; alternate mark. Lysine 37 carries the N6-(beta-hydroxybutyryl)lysine; alternate modification. Lysine 37 is subject to N6-crotonyllysine; alternate. N6-(2-hydroxyisobutyryl)lysine occurs at positions 75 and 76. Lysine 96 is modified (N6-(2-hydroxyisobutyryl)lysine; alternate). At lysine 96 the chain carries N6-(beta-hydroxybutyryl)lysine; alternate. Lysine 96 bears the N6-succinyllysine; alternate mark. N6-glutaryllysine; alternate is present on lysine 96. Lysine 100 carries the N6-glutaryllysine modification. Glutamine 105 is subject to N5-methylglutamine. Residue lysine 119 is modified to N6-(2-hydroxyisobutyryl)lysine; alternate. Lysine 119 carries the post-translational modification N6-(beta-hydroxybutyryl)lysine; alternate. N6-crotonyllysine; alternate is present on residues lysine 119 and lysine 120. An N6-glutaryllysine; alternate mark is found at lysine 119 and lysine 120. Lysine 120 participates in a covalent cross-link: Glycyl lysine isopeptide (Lys-Gly) (interchain with G-Cter in ubiquitin); alternate. Threonine 121 is subject to Phosphothreonine; by DCAF1. The residue at position 126 (lysine 126) is an N6-crotonyllysine; alternate. Lysine 126 bears the N6-glutaryllysine; alternate mark.

Belongs to the histone H2A family. In terms of assembly, the nucleosome is a histone octamer containing two molecules each of H2A, H2B, H3 and H4 assembled in one H3-H4 heterotetramer and two H2A-H2B heterodimers. The octamer wraps approximately 147 bp of DNA. In terms of processing, deiminated on Arg-4 in granulocytes upon calcium entry. Monoubiquitination of Lys-120 (H2AK119Ub) by RING1, TRIM37 and RNF2/RING2 complex gives a specific tag for epigenetic transcriptional repression and participates in X chromosome inactivation of female mammals. It is involved in the initiation of both imprinted and random X inactivation. Ubiquitinated H2A is enriched in inactive X chromosome chromatin. Ubiquitination of H2A functions downstream of methylation of 'Lys-27' of histone H3 (H3K27me). H2AK119Ub by RNF2/RING2 can also be induced by ultraviolet and may be involved in DNA repair. Monoubiquitination of Lys-120 (H2AK119Ub) by TRIM37 may promote transformation of cells in a number of breast cancers. Following DNA double-strand breaks (DSBs), it is ubiquitinated through 'Lys-63' linkage of ubiquitin moieties by the E2 ligase UBE2N and the E3 ligases RNF8 and RNF168, leading to the recruitment of repair proteins to sites of DNA damage. Ubiquitination at Lys-14 and Lys-16 (H2AK13Ub and H2AK15Ub, respectively) in response to DNA damage is initiated by RNF168 that mediates monoubiquitination at these 2 sites, and 'Lys-63'-linked ubiquitin are then conjugated to monoubiquitin; RNF8 is able to extend 'Lys-63'-linked ubiquitin chains in vitro. Deubiquitinated by USP51 at Lys-14 and Lys-16 (H2AK13Ub and H2AK15Ub, respectively) after damaged DNA is repaired. H2AK119Ub and ionizing radiation-induced 'Lys-63'-linked ubiquitination (H2AK13Ub and H2AK15Ub) are distinct events. Post-translationally, phosphorylation on Ser-2 (H2AS1ph) is enhanced during mitosis. Phosphorylation on Ser-2 by RPS6KA5/MSK1 directly represses transcription. Acetylation of H3 inhibits Ser-2 phosphorylation by RPS6KA5/MSK1. Phosphorylation at Thr-121 (H2AT120ph) by DCAF1 is present in the regulatory region of many tumor suppresor genes and down-regulates their transcription. In terms of processing, glutamine methylation at Gln-105 (H2AQ104me) by FBL is specifically dedicated to polymerase I. It is present at 35S ribosomal DNA locus and impairs binding of the FACT complex. Symmetric dimethylation on Arg-4 by the PRDM1/PRMT5 complex may play a crucial role in the germ-cell lineage. Post-translationally, crotonylation (Kcr) is specifically present in male germ cells and marks testis-specific genes in post-meiotic cells, including X-linked genes that escape sex chromosome inactivation in haploid cells. Crotonylation marks active promoters and enhancers and confers resistance to transcriptional repressors. It is also associated with post-meiotically activated genes on autosomes. In terms of processing, lactylated in macrophages by EP300/P300 by using lactoyl-CoA directly derived from endogenous or exogenous lactate, leading to stimulates gene transcription.

It localises to the nucleus. The protein resides in the chromosome. Functionally, core component of nucleosome. Nucleosomes wrap and compact DNA into chromatin, limiting DNA accessibility to the cellular machineries which require DNA as a template. Histones thereby play a central role in transcription regulation, DNA repair, DNA replication and chromosomal stability. DNA accessibility is regulated via a complex set of post-translational modifications of histones, also called histone code, and nucleosome remodeling. This Homo sapiens (Human) protein is Histone H2A type 1-J.